Here is a 307-residue protein sequence, read N- to C-terminus: Glutenin, low molecular weight subunit 1D1 (307 aa).

The first 23 residues, 1 to 23 (MKTFLVFALLAVAATSAIAQMET), serve as a signal peptide directing secretion. 2 disordered regions span residues 31 to 88 (RPWQ…ILPQ) and 105 to 126 (PFSQ…QQQQ). Positions 43-88 (TFPQQPLFSQQQQQQLFPQQPSFSQQQPPFWQQQPPFSQQQPILPQ) are enriched in low complexity.

This sequence belongs to the gliadin/glutenin family. Disulfide-bridge linked aggregates. Expressed in endosperm, but not in husk and leaf tissues.

Glutenins are high-molecular weight seed storage proteins of wheat endosperm. Thought to be responsible for the visco-elastic property of wheat dough. The protein is Glutenin, low molecular weight subunit 1D1 of Triticum aestivum (Wheat).